A 118-amino-acid polypeptide reads, in one-letter code: Late cornified envelope protein 1B (118 aa).

Residues 87–118 (CHRPQSSGCCSQPSGGSSCCGGGSGQHSGGCC) form a disordered region. The span at 90–103 (PQSSGCCSQPSGGS) shows a compositional bias: low complexity. Gly residues predominate over residues 104–118 (SCCGGGSGQHSGGCC).

Belongs to the LCE family. As to quaternary structure, interacts with CYSRT1; the interaction is direct. In terms of tissue distribution, skin-specific. Expression was readily detected in adult trunk skin, adult arm skin, fetal skin, penal skin, vulva, esophagus and tongue. Not expressed in the cervix, rectum, lung, colon, or placenta.

Functionally, precursors of the cornified envelope of the stratum corneum. This is Late cornified envelope protein 1B (LCE1B) from Homo sapiens (Human).